The sequence spans 1605 residues: Zinc finger protein jing homolog (1605 aa).

Polar residues predominate over residues 1 to 15; sequence MQHQSLSVRNSSGIS. 7 disordered regions span residues 1-28, 60-117, 359-388, 441-468, 856-877, 917-947, and 991-1213; these read MQHQSLSVRNSSGISGNRDENFPSVRSS, QWPW…QQSN, TRKVSHSPQGGLGVGQPKKPVTIAPRTSDP, QQHQQSTQTQQQTSQNQSQPQQNQTQAQ, STTSSKPPPPIKPISSTEPPKL, TKATSTTPIKDKPKPNLPMSEPPALAPASCT, and NDSG…TDFL. Positions 64-117 are enriched in low complexity; the sequence is NTSNNTNATNSNNVQSNNNSSTATSNSSTNSNNSPAVNTPTTQNQSQPTTQQSN. Polar residues predominate over residues 991–1000; the sequence is NDSGIVANSS. Over residues 1021-1030 the composition is skewed to basic and acidic residues; sequence PQKKDEESRQ. Residues 1035–1049 are compositionally biased toward pro residues; the sequence is SPVPSPSPLSEPPVI. Acidic residues-rich tracts occupy residues 1053 to 1090 and 1099 to 1110; these read SEPEPEPEPELEPEPEMEPEPETEPEPEVEPEPEDEPH and SSEAVELPELED. Over residues 1112–1126 the composition is skewed to pro residues; sequence QPSPPLPCELPPPPT. Low complexity predominate over residues 1135–1149; that stretch reads LSLPPSQKSPKSLLL. Residues 1165-1201 are compositionally biased toward polar residues; the sequence is QESMSSDQDYSNQSPLDESSPTGSAEPSESQRSTTPV. The C2H2-type 1 zinc-finger motif lies at 1260 to 1285; that stretch reads GVCYWSNCDAQFDTSSKLLDHLQIQH. A C2H2-type 2; degenerate zinc finger spans residues 1293–1320; that stretch reads FACLWDGCKVHNKESCSRRWLERHVLSH. A C2H2-type 3 zinc finger spans residues 1326–1350; sequence HKCIVAGCGMRFGSQLALEKHVNHH. 2 disordered regions span residues 1352–1371 and 1511–1605; these read NNTDNASAGKRSSDPPLPKV and CSRS…SSTS. 2 stretches are compositionally biased toward low complexity: residues 1511-1537 and 1556-1605; these read CSRSSFSSSSSSSSSSGCSSASSSLIS and KQSY…SSTS.

Belongs to the AEBP2/jing C2H2-type zinc-finger family.

Its subcellular location is the nucleus. May functionally interact with Polycomb group (PcG) and trithorax group (trxG) proteins to repress transcription. The polypeptide is Zinc finger protein jing homolog (Aedes aegypti (Yellowfever mosquito)).